Here is a 224-residue protein sequence, read N- to C-terminus: Urease accessory protein UreF (224 aa).

This sequence belongs to the UreF family. In terms of assembly, ureD, UreF and UreG form a complex that acts as a GTP-hydrolysis-dependent molecular chaperone, activating the urease apoprotein by helping to assemble the nickel containing metallocenter of UreC. The UreE protein probably delivers the nickel.

It is found in the cytoplasm. In terms of biological role, required for maturation of urease via the functional incorporation of the urease nickel metallocenter. This chain is Urease accessory protein UreF, found in Azotobacter vinelandii (strain DJ / ATCC BAA-1303).